The chain runs to 402 residues: S-adenosylmethionine synthase (402 aa).

Histidine 15 lines the ATP pocket. Aspartate 17 is a Mg(2+) binding site. K(+) is bound at residue glutamate 43. Positions 56 and 99 each coordinate L-methionine. Residues 99–109 (QSPDIAQGVDT) form a flexible loop region. ATP is bound by residues 174 to 176 (DGK), 247 to 248 (RF), aspartate 256, 262 to 263 (RK), alanine 279, and lysine 283. Aspartate 256 provides a ligand contact to L-methionine. Lysine 287 serves as a coordination point for L-methionine.

It belongs to the AdoMet synthase family. In terms of assembly, homotetramer; dimer of dimers. Requires Mg(2+) as cofactor. K(+) is required as a cofactor.

It is found in the cytoplasm. It catalyses the reaction L-methionine + ATP + H2O = S-adenosyl-L-methionine + phosphate + diphosphate. It participates in amino-acid biosynthesis; S-adenosyl-L-methionine biosynthesis; S-adenosyl-L-methionine from L-methionine: step 1/1. In terms of biological role, catalyzes the formation of S-adenosylmethionine (AdoMet) from methionine and ATP. The overall synthetic reaction is composed of two sequential steps, AdoMet formation and the subsequent tripolyphosphate hydrolysis which occurs prior to release of AdoMet from the enzyme. This chain is S-adenosylmethionine synthase, found in Streptomyces coelicolor (strain ATCC BAA-471 / A3(2) / M145).